Consider the following 502-residue polypeptide: Glycerol kinase (502 aa).

Thr-14 lines the ADP pocket. 3 residues coordinate ATP: Thr-14, Thr-15, and Ser-16. A sn-glycerol 3-phosphate-binding site is contributed by Thr-14. Residue Arg-18 participates in ADP binding. The sn-glycerol 3-phosphate site is built by Arg-84, Glu-85, Tyr-136, and Asp-246. Residues Arg-84, Glu-85, Tyr-136, Asp-246, and Gln-247 each coordinate glycerol. Residues Thr-268 and Gly-311 each coordinate ADP. Positions 268, 311, 315, and 412 each coordinate ATP. Residues Gly-412 and Asn-416 each coordinate ADP.

The protein belongs to the FGGY kinase family. In terms of assembly, homotetramer and homodimer (in equilibrium). Heterodimer with EIIA-Glc. Binds 1 zinc ion per glycerol kinase EIIA-Glc dimer. The zinc ion is important for dimerization.

It catalyses the reaction glycerol + ATP = sn-glycerol 3-phosphate + ADP + H(+). The protein operates within polyol metabolism; glycerol degradation via glycerol kinase pathway; sn-glycerol 3-phosphate from glycerol: step 1/1. With respect to regulation, activity of this regulatory enzyme is affected by several metabolites. Allosterically and non-competitively inhibited by fructose 1,6-bisphosphate (FBP) and unphosphorylated phosphocarrier protein EIIA-Glc (III-Glc), an integral component of the bacterial phosphotransferase (PTS) system. Functionally, key enzyme in the regulation of glycerol uptake and metabolism. Catalyzes the phosphorylation of glycerol to yield sn-glycerol 3-phosphate. This is Glycerol kinase from Escherichia coli O127:H6 (strain E2348/69 / EPEC).